The primary structure comprises 248 residues: MKNWIKVAVAAIALSAATVQAATEVKVGMSGRYFPFTFVKQDKLQGFEVDMWDEIGKRNDYKIEYVTANFSGLFGLLETGRIDTISNQITMTDARKAKYLFADPYVVDGAQITVRKGNDSIQGVEDLAGKTVAVNLGSNFEQLLRDYDKDGKINIKTYDTGIEHDVALGRADAFIMDRLSALELIKKTGLPLQLAGEPFETIQNAWPFVDNEKGRKLQAEVNKALAEMRADGTVEKISVKWFGADITK.

A signal peptide spans 1-21 (MKNWIKVAVAAIALSAATVQA).

It belongs to the bacterial solute-binding protein 3 family.

It is found in the periplasm. Probably part of a binding-protein-dependent transport system for an amino acid. The sequence is that of Putative amino-acid ABC transporter-binding protein PatH (patH) from Vibrio harveyi (Beneckea harveyi).